We begin with the raw amino-acid sequence, 184 residues long: Ribosome-recycling factor (184 aa).

It belongs to the RRF family.

It localises to the cytoplasm. In terms of biological role, responsible for the release of ribosomes from messenger RNA at the termination of protein biosynthesis. May increase the efficiency of translation by recycling ribosomes from one round of translation to another. The polypeptide is Ribosome-recycling factor (Clostridium botulinum (strain Loch Maree / Type A3)).